We begin with the raw amino-acid sequence, 426 residues long: Oligouridylate-binding protein 1A (426 aa).

The interval M1–A26 is disordered. Over residues Q9–A26 the composition is skewed to low complexity. RRM domains lie at R63–A137 and F148–K226. Residues F230–F268 form a disordered region. At S250 the chain carries Phosphoserine. In terms of domain architecture, RRM 3 spans T269 to K344.

Interacts with UBA1A and UBA2A.

It is found in the nucleus. Heterogeneous nuclear ribonucleoprotein (hnRNP)-like protein that acts as a component of the pre-mRNA processing machinery. Functions to facilitate the nuclear maturation of plant pre-mRNAs. The chain is Oligouridylate-binding protein 1A (UBP1A) from Arabidopsis thaliana (Mouse-ear cress).